Reading from the N-terminus, the 215-residue chain is Adenylate kinase (215 aa).

Residue 10–15 (GAGKGT) participates in ATP binding. The tract at residues 30 to 59 (STGDIFRDAVNQGSELGQEAQKYMSSGQLV) is NMP. Residues Thr31, Arg36, 57-59 (QLV), 85-88 (GFPR), and Gln92 each bind AMP. The segment at 126–163 (GRISCRECKRVYNLNFNPPREQGKCDSCGGELVQRNDD) is LID. An ATP-binding site is contributed by Arg127. Cys130 and Cys133 together coordinate Zn(2+). 136-137 (VY) contributes to the ATP binding site. Zn(2+) is bound by residues Cys150 and Cys153. Positions 160 and 171 each coordinate AMP. Arg199 contacts ATP.

Belongs to the adenylate kinase family. As to quaternary structure, monomer.

The protein resides in the cytoplasm. The catalysed reaction is AMP + ATP = 2 ADP. The protein operates within purine metabolism; AMP biosynthesis via salvage pathway; AMP from ADP: step 1/1. Its function is as follows. Catalyzes the reversible transfer of the terminal phosphate group between ATP and AMP. Plays an important role in cellular energy homeostasis and in adenine nucleotide metabolism. In Syntrophomonas wolfei subsp. wolfei (strain DSM 2245B / Goettingen), this protein is Adenylate kinase.